The following is a 104-amino-acid chain: L-rhamnose mutarotase (104 aa).

Tyr18 is a binding site for substrate. Residue His22 is the Proton donor of the active site. Residues Tyr41 and Trp76–Trp77 contribute to the substrate site.

This sequence belongs to the rhamnose mutarotase family. In terms of assembly, homodimer.

Its subcellular location is the cytoplasm. It carries out the reaction alpha-L-rhamnose = beta-L-rhamnose. Its pathway is carbohydrate metabolism; L-rhamnose metabolism. Its function is as follows. Involved in the anomeric conversion of L-rhamnose. This Shigella flexneri serotype 5b (strain 8401) protein is L-rhamnose mutarotase.